The chain runs to 277 residues: Diaminopimelate epimerase (277 aa).

2 residues coordinate substrate: Asn11 and Asn72. Catalysis depends on Cys81, which acts as the Proton donor. Substrate-binding positions include 82–83 (GN), Asn189, and 207–208 (ER). Cys217 functions as the Proton acceptor in the catalytic mechanism. 218–219 (GT) serves as a coordination point for substrate.

Belongs to the diaminopimelate epimerase family. In terms of assembly, homodimer.

Its subcellular location is the cytoplasm. The enzyme catalyses (2S,6S)-2,6-diaminopimelate = meso-2,6-diaminopimelate. It participates in amino-acid biosynthesis; L-lysine biosynthesis via DAP pathway; DL-2,6-diaminopimelate from LL-2,6-diaminopimelate: step 1/1. Functionally, catalyzes the stereoinversion of LL-2,6-diaminopimelate (L,L-DAP) to meso-diaminopimelate (meso-DAP), a precursor of L-lysine and an essential component of the bacterial peptidoglycan. The sequence is that of Diaminopimelate epimerase from Hydrogenobaculum sp. (strain Y04AAS1).